A 436-amino-acid chain; its full sequence is Septin-7 (436 aa).

S2 bears the N-acetylserine mark. Y29 is modified (phosphotyrosine). The 270-residue stretch at 46-315 folds into the Septin-type G domain; sequence RGFEFTLMVV…ENYRSRKLAA (270 aa). The interaction with SEPTIN12 stretch occupies residues 46 to 316; that stretch reads RGFEFTLMVV…NYRSRKLAAV (271 aa). Residues 56–63 form a G1 motif region; the sequence is GESGLGKS. GTP is bound at residue 56–63; it reads GESGLGKS. S76 is subject to Phosphoserine. Residues T89, G115, and 194–202 contribute to the GTP site; that span reads KADTLTPEE. A G3 motif region spans residues 112–115; it reads DTPG. Residues 193 to 196 form a G4 motif region; the sequence is AKAD. The residue at position 227 (T227) is a Phosphothreonine. Residues G249 and R264 each contribute to the GTP site. Residues 331–436 are a coiled coil; sequence TKSPLAQMEE…EKNKKKGKIF (106 aa). S333 is modified (phosphoserine). Position 372 is an N6-acetyllysine (K372). Residues 377–409 are compositionally biased toward basic and acidic residues; sequence ELQRRHEQMKKNLEAQHKELEEKRRQFEEEKAN. A disordered region spans residues 377 to 436; it reads ELQRRHEQMKKNLEAQHKELEEKRRQFEEEKANWEAQQRILEQQNSSRTLEKNKKKGKIF. The residue at position 423 (S423) is a Phosphoserine. T425 carries the phosphothreonine modification.

The protein belongs to the TRAFAC class TrmE-Era-EngA-EngB-Septin-like GTPase superfamily. Septin GTPase family. As to quaternary structure, septins polymerize into heterooligomeric protein complexes that form filaments, and associate with cellular membranes, actin filaments and microtubules. GTPase activity is required for filament formation. Filaments are assembled from asymmetrical heterotrimers, composed of SEPTIN2, SEPTIN6 and SEPTIN7 that associate head-to-head to form a hexameric unit. Within the trimer, directly interacts with SEPTIN6, while interaction with SEPTIN2 seems indirect. In the absence of SEPTIN6, forms homodimers. Interacts directly with CENPE and links CENPE to septin filaments composed of SEPTIN2, SEPTIN6 and SEPTIN7. Interacts with SEPTIN5. Component of a septin core octameric complex consisting of SEPTIN12, SEPTIN7, SEPTIN6 and SEPTIN2 or SEPTIN4 in the order 12-7-6-2-2-6-7-12 or 12-7-6-4-4-6-7-12 and located in the sperm annulus; the SEPTIN12:SEPTIN7 association is mediated by the respective GTP-binding domains. Interacts with SEPTIN2, SEPTIN7, SEPTIN8, SEPTIN9 and SEPTIN11.

It is found in the cytoplasm. The protein resides in the chromosome. Its subcellular location is the centromere. It localises to the kinetochore. The protein localises to the cytoskeleton. It is found in the spindle. The protein resides in the cleavage furrow. Its subcellular location is the midbody. It localises to the cilium axoneme. The protein localises to the cell projection. It is found in the cilium. The protein resides in the flagellum. Functionally, filament-forming cytoskeletal GTPase. Required for normal organization of the actin cytoskeleton. Required for normal progress through mitosis. Involved in cytokinesis. Required for normal association of CENPE with the kinetochore. Plays a role in ciliogenesis and collective cell movements. Forms a filamentous structure with SEPTIN12, SEPTIN6, SEPTIN2 and probably SEPTIN4 at the sperm annulus which is required for the structural integrity and motility of the sperm tail during postmeiotic differentiation. This chain is Septin-7, found in Rattus norvegicus (Rat).